Consider the following 535-residue polypeptide: MTTTIQNPILKGFNPDPSIVRVGDDYYIATSTFEWFPGIQLHHSRDLINWRLVGHALTRTSQLNMMGMDNSEGVYAPALTYSDGTFWLCFSNVHSCRGGNWMATPSYVVTADSIEGPWSEPVPIGNYGFDPSLFHDDDGKKYMLNMIWGGRAKTNFFGGIIMQEFDADEGKLVGAPKTVFEGTELGCTEGPQLLKKDDYYYLITAEGGTERNHAVTVCRSKHIWGPYEVHPENPILTSRFQEHAELSRAGHGFLVETQTGEWYMSHLCGRRIPNPEGYQFMPKYDNGFSILGRESALQKAHWQDDWPYIATGKTPVVEVEAPNLPLHPWPESPARDEFIDPTLSLISTLREPVSEKWLSLSERPGFLRLKGRHYLYSRYEQSMVARRFQAHNATVETKLEFKPNTPYEMAGLCAYYARNGHYFLKMTANDLGERVLQVVGNINDVYGEYSNDVVIGDADTVYMRLELKTQWYQYSYSLDGVDWYEIGPALNSTPLSDEGGPDIFRFTGSFAALFVADITGQKRHADFDYFEYLEH.

The active-site Proton acceptor is the Asp-16. Residue Glu-189 is the Proton donor of the active site.

Belongs to the glycosyl hydrolase 43 family.

It carries out the reaction Hydrolysis of successive xylose residues from the non-reducing termini of (1-&gt;3)-beta-D-xylans.. With respect to regulation, inhibited by Ag(+), Cu(2+), Hg(2+), Mn(2+), Pb(2+), Zn(2+) and p-chloromercuric benzoic acid. Its function is as follows. Beta-1,3-xylosidase that hydrolyzes beta-1,3-xylooligosaccharides to D-xylose. The chain is Xylan 1,3-beta-xylosidase (xloA) from Vibrio sp.